The chain runs to 286 residues: Gap junction alpha-6 protein (286 aa).

The Cytoplasmic portion of the chain corresponds to 1–23 (MSDWSALHQLLEKVQPYSTAGGK). A helical transmembrane segment spans residues 24–41 (VWIKVLFIFRILLLGTAI). Residues 42-76 (ESAWSDEQFEFHCNTQQPGCENVCYDQAFPISHVR) lie on the Extracellular side of the membrane. Residues 77–99 (LWVLQVIFVSVPTLLHLAHVYYV) traverse the membrane as a helical segment. At 100-151 (IRQNEKLKKQEEEELKVAHFNGASGERRLQKHTGKHIKCGSKEHGNRKMRGR) the chain is on the cytoplasmic side. The helical transmembrane segment at 152–174 (LLLTYMASIFFKSVFEVAFLLIQ) threads the bilayer. Over 175 to 209 (WYLYGFTLSAVYICEQSPCPHRVDCFLSRPTEKTI) the chain is Extracellular. Residues 210–232 (FILFMLVVSMVSFVLNVIELFYV) traverse the membrane as a helical segment. The Cytoplasmic segment spans residues 233-286 (LFKAIKNHLGNEKEEVYCNPVELQKPSCVSSSAVLTTICSSDQVVPVGLSSFYM).

Belongs to the connexin family. Alpha-type (group II) subfamily. In terms of assembly, a connexon is composed of a hexamer of connexins. Expressed in testis.

Its subcellular location is the cell membrane. The protein localises to the cell junction. It is found in the gap junction. Its function is as follows. One gap junction consists of a cluster of closely packed pairs of transmembrane channels, the connexons, through which materials of low MW diffuse from one cell to a neighboring cell. This Rattus norvegicus (Rat) protein is Gap junction alpha-6 protein (Gja6).